Reading from the N-terminus, the 96-residue chain is NADH-ubiquinone oxidoreductase chain 4L (96 aa).

The next 3 membrane-spanning stretches (helical) occupy residues 2–22 (IMFL…FCFV), 28–48 (LLSM…MLFI), and 62–82 (MFLT…VSMI).

The protein belongs to the complex I subunit 4L family.

Its subcellular location is the mitochondrion membrane. It carries out the reaction a ubiquinone + NADH + 5 H(+)(in) = a ubiquinol + NAD(+) + 4 H(+)(out). Its function is as follows. Core subunit of the mitochondrial membrane respiratory chain NADH dehydrogenase (Complex I) that is believed to belong to the minimal assembly required for catalysis. Complex I functions in the transfer of electrons from NADH to the respiratory chain. The immediate electron acceptor for the enzyme is believed to be ubiquinone. This chain is NADH-ubiquinone oxidoreductase chain 4L (mt:ND4L), found in Drosophila nasuta F (Fruit fly).